Here is a 453-residue protein sequence, read N- to C-terminus: Nuclear and cytoplasmic polyadenylated RNA-binding protein PUB1 (453 aa).

The segment at 1–67 (MSENNEEQHQ…PSVVPANAIT (67 aa)) is disordered. Ser2 is subject to N-acetylserine. RRM domains follow at residues 75-152 (RVLY…WAFQ) and 162-240 (FNLF…WAAK). Residues 241–262 (RDNNNNNNYQQRRNYGNNNRGG) form a disordered region. The span at 244–262 (NNNNNYQQRRNYGNNNRGG) shows a compositional bias: low complexity. Residue Arg260 is modified to Omega-N-methylarginine. The interval 260–264 (RGGFR) is RNA-binding RGG-box. Residues 341–413 (TTAYIGNIPH…RNLRTGWGKE (73 aa)) enclose the RRM 3 domain. Residues 419 to 453 (PQQQQQGGQPLIMNDQQQPVMSEQQQQQQQQQQQQ) are disordered. The segment covering 434–453 (QQQPVMSEQQQQQQQQQQQQ) has biased composition (low complexity).

As to quaternary structure, interacts with NAB2.

It localises to the cytoplasm. Its subcellular location is the nucleus. The protein localises to the P-body. The protein resides in the stress granule. Functionally, may be associated with hnRNA within the nucleus and remains associated during nucleocytoplasmic mRNA transport, once the proteins are in the cytoplasm, disassembly of PUB1-RNA complexes may occur prior to PAB1 binding and formation of a translationally competent RNP complex. Binds to polyadenylated RNA; prefers to bind poly(rU); binds to T-rich single-stranded DNA. This chain is Nuclear and cytoplasmic polyadenylated RNA-binding protein PUB1, found in Saccharomyces cerevisiae (strain ATCC 204508 / S288c) (Baker's yeast).